We begin with the raw amino-acid sequence, 483 residues long: Probable L-xylulose kinase (483 aa).

It belongs to the FGGY kinase family. In terms of assembly, homodimer.

The enzyme catalyses L-xylulose + ATP = L-xylulose 5-phosphate + ADP + H(+). This chain is Probable L-xylulose kinase (lyx), found in Pasteurella multocida (strain Pm70).